The sequence spans 152 residues: Endoribonuclease YbeY (152 aa).

3 residues coordinate Zn(2+): His-117, His-121, and His-127.

The protein belongs to the endoribonuclease YbeY family. Zn(2+) is required as a cofactor.

Its subcellular location is the cytoplasm. Functionally, single strand-specific metallo-endoribonuclease involved in late-stage 70S ribosome quality control and in maturation of the 3' terminus of the 16S rRNA. This chain is Endoribonuclease YbeY, found in Sulfurihydrogenibium sp. (strain YO3AOP1).